We begin with the raw amino-acid sequence, 409 residues long: Endoglucanase B (409 aa).

Residues H61, 65–66 (WY), Y92, and H127 each bind substrate. E165 functions as the Proton donor in the catalytic mechanism. Y228 serves as a coordination point for substrate. The active-site Nucleophile is E254. Residues 260–261 (AT), W288, and 293–295 (KDE) each bind substrate. A disordered region spans residues 326-372 (IRESATTPPSDPTPPSDPDPGEPEPDPGEPDPTPPSDPGDYPAWDPN). Positions 334 to 343 (PSDPTPPSDP) are enriched in pro residues. The span at 344–354 (DPGEPEPDPGE) shows a compositional bias: acidic residues.

Belongs to the glycosyl hydrolase 5 (cellulase A) family.

It carries out the reaction Endohydrolysis of (1-&gt;4)-beta-D-glucosidic linkages in cellulose, lichenin and cereal beta-D-glucans.. In Evansella cellulosilytica (strain ATCC 21833 / DSM 2522 / FERM P-1141 / JCM 9156 / N-4) (Bacillus cellulosilyticus), this protein is Endoglucanase B (celB).